The following is a 260-amino-acid chain: Ribonuclease HII (260 aa).

Positions 71–259 (ELVAGVDEVG…VHDAIVNKKN (189 aa)) constitute an RNase H type-2 domain. The a divalent metal cation site is built by D77, E78, and D169.

The protein belongs to the RNase HII family. It depends on Mn(2+) as a cofactor. Mg(2+) is required as a cofactor.

The protein localises to the cytoplasm. The enzyme catalyses Endonucleolytic cleavage to 5'-phosphomonoester.. Its function is as follows. Endonuclease that specifically degrades the RNA of RNA-DNA hybrids. The sequence is that of Ribonuclease HII from Leuconostoc citreum (strain KM20).